A 492-amino-acid polypeptide reads, in one-letter code: MSLEETLRSLSLDYLNLLINGQAFSDVTFQVEGRLVHAHRCILAARSLFFRKFFCGPDPPSGLDPIGGGSSRQPTVRPGVIPVNSVGYEVFLLLLQFLYSGQVSIVPQKHEPRPNCGERGCWHTHCTSAVDLALDTLAAARYFGVEQLALLTQKQLVSMVEKASIDDVMKVLIASRKQEMPQLWTTCSHLVAKSGLPPEILAKHLSIDVVAKIEELRLKSSLARRSLMPLHHHHHHHHHHDFGDLEDQKIRRMRRALDSSDVELVKLMVMGEGLNLDEALALHYAVENCSREVVKALLELGAADVNYPAGPAGKTSLHVAAEMVSPEMVAVLLDHHADPTVRTVDGVTPLDILRTLTSDFLFKGAVPGLNHIEPNKLRLCLELVQSAALVLSREENNASNNNNNNNNASSSAAPVYPPMSEDHSSSSSGNNNNNNNSIGNLNLDSRLVYLNLGATQMGGDDDNRHNNSHREAMNRQGGHGCDPSMYHHSHDF.

Residues 25-107 (SDVTFQVEGR…LYSGQVSIVP (83 aa)) form the BTB domain. The segment at 113-127 (RPNCGERGCWHTHCT) adopts a C2HC NPR-type zinc-finger fold. C116, C121, H123, and C126 together coordinate Zn(2+). ANK repeat units lie at residues 248 to 277 (QKIR…LNLD), 278 to 307 (EALA…DVNY), 312 to 341 (AGKT…DPTV), and 345 to 379 (DGVT…KLRL). Disordered regions lie at residues 395–439 (ENNA…NSIG) and 455–492 (TQMG…SHDF). Composition is skewed to low complexity over residues 397 to 413 (NASN…SSAA) and 425 to 439 (SSSS…NSIG). The segment covering 461-473 (DDNRHNNSHREAM) has biased composition (basic and acidic residues).

It belongs to the plant 'ANKYRIN-BTB/POZ' family. 'NOOT-BOP-COCH-like' (NBCL) subfamily. As to quaternary structure, homodimer.

The protein resides in the nucleus. It is found in the cytoplasm. The protein localises to the cell membrane. It functions in the pathway protein modification; protein ubiquitination. In terms of biological role, may act as a substrate-specific adapter of an E3 ubiquitin-protein ligase complex (CUL3-RBX1-BTB) which mediates the ubiquitination and subsequent proteasomal degradation of target proteins. Transcriptional co-regulator involved in the promotion of leaf and floral meristem fate and determinacy. Required for the abscission of senescent organs, probably by regulating the cell wall disorganization in abscission zones (AZs, e.g. pulvini at the base of leaves). Involved in the coordination of the symbiotic nodule developmental program; promotes the formation of root nodules by interacting directly with APP1 to modulate the expression of the nuclear transcription factor Y subunit (NF-YA1), a key nodulin. Involved in the regulation of indeterminate nodule identity in association with NOOT1. The sequence is that of BTB/POZ domain and ankyrin repeat-containing protein NOOT2 from Medicago truncatula (Barrel medic).